The chain runs to 174 residues: Large ribosomal subunit protein uL10 (174 aa).

The protein belongs to the universal ribosomal protein uL10 family. As to quaternary structure, part of the ribosomal stalk of the 50S ribosomal subunit. The N-terminus interacts with L11 and the large rRNA to form the base of the stalk. The C-terminus forms an elongated spine to which L12 dimers bind in a sequential fashion forming a multimeric L10(L12)X complex.

In terms of biological role, forms part of the ribosomal stalk, playing a central role in the interaction of the ribosome with GTP-bound translation factors. The sequence is that of Large ribosomal subunit protein uL10 from Nitrosospira multiformis (strain ATCC 25196 / NCIMB 11849 / C 71).